The chain runs to 491 residues: 3-octaprenyl-4-hydroxybenzoate carboxy-lyase (491 aa).

Asn-172 lines the Mn(2+) pocket. Prenylated FMN contacts are provided by residues 175–177 (IYR), 189–191 (RWL), and 194–195 (RG). Glu-238 is a Mn(2+) binding site. Asp-287 functions as the Proton donor in the catalytic mechanism.

The protein belongs to the UbiD family. As to quaternary structure, homohexamer. Prenylated FMN serves as cofactor. The cofactor is Mn(2+).

It is found in the cell membrane. It carries out the reaction a 4-hydroxy-3-(all-trans-polyprenyl)benzoate + H(+) = a 2-(all-trans-polyprenyl)phenol + CO2. It functions in the pathway cofactor biosynthesis; ubiquinone biosynthesis. Functionally, catalyzes the decarboxylation of 3-octaprenyl-4-hydroxy benzoate to 2-octaprenylphenol, an intermediate step in ubiquinone biosynthesis. This chain is 3-octaprenyl-4-hydroxybenzoate carboxy-lyase, found in Klebsiella pneumoniae subsp. pneumoniae (strain ATCC 700721 / MGH 78578).